The sequence spans 342 residues: Cathepsin B-like cysteine proteinase 2 (342 aa).

A signal peptide spans 1-18 (MKYLVLALCTYLCSQSGA). A propeptide spans 19–86 (DENAAQGIPL…VKEDPDPEVD (68 aa)) (activation peptide). A glycan (N-linked (GlcNAc...) asparagine) is linked at Asn-99. 6 disulfide bridges follow: Cys-100–Cys-128, Cys-111–Cys-156, Cys-147–Cys-214, Cys-148–Cys-152, Cys-185–Cys-218, and Cys-193–Cys-205. Cys-114 is an active-site residue. Asn-138 is a glycosylation site (N-linked (GlcNAc...) asparagine). Asn-198 is a glycosylation site (N-linked (GlcNAc...) asparagine). The active site involves His-285. N-linked (GlcNAc...) asparagine glycosylation is present at Asn-296. The active site involves Asn-305.

Belongs to the peptidase C1 family.

In terms of biological role, expression of the protease correlates with blood-feeding and suggests a role for the protease in blood digestion. In Haemonchus contortus (Barber pole worm), this protein is Cathepsin B-like cysteine proteinase 2 (AC-2).